Reading from the N-terminus, the 285-residue chain is Sulfotransferase 2A1 (285 aa).

The 3'-phosphoadenylyl sulfate site is built by lysine 44, serine 45, glycine 46, threonine 47, asparagine 48, and tryptophan 49. Catalysis depends on histidine 99, which acts as the Proton acceptor. Residues arginine 121, serine 129, tyrosine 184, serine 218, methionine 223, arginine 247, lysine 248, and glycine 249 each contribute to the 3'-phosphoadenylyl sulfate site. At serine 251 the chain carries Phosphoserine.

The protein belongs to the sulfotransferase 1 family. Homodimer. Post-translationally, the N-terminus is blocked. In terms of tissue distribution, liver, adrenal and at lower level in the kidney. Is present in human fetus in higher level in the adrenal than the liver and the kidney.

It is found in the cytoplasm. The catalysed reaction is an alcohol + 3'-phosphoadenylyl sulfate = an alkyl sulfate + adenosine 3',5'-bisphosphate + H(+). It carries out the reaction (24S)-hydroxycholesterol + 3'-phosphoadenylyl sulfate = (24S)-hydroxycholesterol 24-sulfate + adenosine 3',5'-bisphosphate + H(+). The enzyme catalyses (24S)-hydroxycholesterol + 3'-phosphoadenylyl sulfate = (24S)-hydroxycholesterol 3-sulfate + adenosine 3',5'-bisphosphate + H(+). It catalyses the reaction (24S)-hydroxycholesterol 24-sulfate + 3'-phosphoadenylyl sulfate = (24S)-hydroxycholesterol 3,24-disulfate + adenosine 3',5'-bisphosphate + H(+). The catalysed reaction is 3beta-hydroxyandrost-5-en-17-one + 3'-phosphoadenylyl sulfate = dehydroepiandrosterone 3-sulfate + adenosine 3',5'-bisphosphate + H(+). It carries out the reaction pregnenolone + 3'-phosphoadenylyl sulfate = pregnenolone sulfate + adenosine 3',5'-bisphosphate + H(+). The enzyme catalyses androsterone + 3'-phosphoadenylyl sulfate = androsterone 3alpha-sulfate + adenosine 3',5'-bisphosphate + H(+). It catalyses the reaction taurolithocholate + 3'-phosphoadenylyl sulfate = taurolithocholate 3-sulfate + adenosine 3',5'-bisphosphate + H(+). The catalysed reaction is lithocholate + 3'-phosphoadenylyl sulfate = lithocholate sulfate + adenosine 3',5'-bisphosphate + H(+). Subject to substrate inhibition. Alternate orientations for binding of steroid substrates to SULT2A1 may play a role in substrate inhibition. Its function is as follows. Sulfotransferase that utilizes 3'-phospho-5'-adenylyl sulfate (PAPS) as sulfonate donor to catalyze the sulfonation of steroids and bile acids in the liver and adrenal glands. Mediates the sulfation of a wide range of steroids and sterols, including pregnenolone, androsterone, DHEA, bile acids, cholesterol and as well many xenobiotics that contain alcohol and phenol functional groups. Sulfonation increases the water solubility of most compounds, and therefore their renal excretion, but it can also result in bioactivation to form active metabolites. Plays an important role in maintening steroid and lipid homeostasis. Plays a key role in bile acid metabolism. In addition, catalyzes the metabolic activation of potent carcinogenic polycyclic arylmethanols. The chain is Sulfotransferase 2A1 (SULT2A1) from Homo sapiens (Human).